The chain runs to 198 residues: Probable chorismate pyruvate-lyase (198 aa).

Residues Arg76, Leu114, and Glu172 each coordinate substrate.

This sequence belongs to the UbiC family.

It localises to the cytoplasm. It carries out the reaction chorismate = 4-hydroxybenzoate + pyruvate. It participates in cofactor biosynthesis; ubiquinone biosynthesis. Removes the pyruvyl group from chorismate, with concomitant aromatization of the ring, to provide 4-hydroxybenzoate (4HB) for the ubiquinone pathway. This Bordetella avium (strain 197N) protein is Probable chorismate pyruvate-lyase.